Here is a 546-residue protein sequence, read N- to C-terminus: uncharacterized protein (546 aa).

This sequence belongs to the IIV-6 098R family.

This is an uncharacterized protein from Aedes vexans (Inland floodwater mosquito).